A 1341-amino-acid polypeptide reads, in one-letter code: WASH complex subunit 2A (1341 aa).

Positions 1–220 are sufficient for interaction with WASHC3, WASHC4 and WASHC5; required for interaction with WASHC1; sequence MMNRTTPDQE…VGSDRGSIVD (220 aa). Residues 202 to 214 show a composition bias toward low complexity; sequence GELSSEEGSVGSD. A disordered region spans residues 202–405; that stretch reads GELSSEEGSV…SSSKPGKKIP (204 aa). Residues 220-232 are compositionally biased toward acidic residues; the sequence is DTEEEKEEEESDE. The span at 233–244 shows a compositional bias: basic and acidic residues; that stretch reads DFAHHSDNEQNR. 2 stretches are compositionally biased toward acidic residues: residues 250-259 and 266-276; these read SDEEEDDDGC and EKEEEDIEDIE. The segment covering 293–307 has biased composition (basic and acidic residues); sequence LAARIKGDAVGRVDE. Residues 355–366 are compositionally biased toward gly residues; that stretch reads GSGGGLFSGGKG. Residues 356–600 form a sufficient for interaction with CCDC93 region; that stretch reads SGGGLFSGGK…QTLCLQAQRE (245 aa). Positions 356–742 are required for interaction with CCDC22 and VPS35L; that stretch reads SGGGLFSGGK…KEAQLGVKSV (387 aa). The tract at residues 357-1341 is interaction with VPS35; the sequence is GGGLFSGGKG…DDPLNAFGGQ (985 aa). Short sequence motifs (LFa) lie at residues 367-378, 411-419, 450-463, and 482-491; these read LFDDEDEESDLF, VFLGDTDVF, LFDDDDGDDDDDFF, and IFGDEEGDLF. Residues 422–554 are disordered; it reads ASVPSMKEPQ…EDLFSSQSAS (133 aa). Residues 451–462 are compositionally biased toward acidic residues; it reads FDDDDGDDDDDF. Basic and acidic residues predominate over residues 507–517; sequence DENKARAEKKV. The segment covering 518 to 536 has biased composition (polar residues); the sequence is TLSSSKNLKPSSETKTQKG. 3 consecutive short sequence motifs (LFa) follow at residues 537–548, 572–583, and 617–629; these read LFSDEEDSEDLF, LFDDEDEEDNLF, and LFSSDEEDQWNIP. Position 539 is a phosphoserine (Ser539). Disordered stretches follow at residues 621–664, 696–739, and 751–838; these read DEED…KTSL, DSGG…QLGV, and ESLK…KSTG. Over residues 637-647 the composition is skewed to basic and acidic residues; that stretch reads SDSRSKGEPRD. Short sequence motifs (LFa) lie at residues 664 to 674, 690 to 702, and 726 to 738; these read LFEEDEEDDLF, LFEDDVDSGGSLF, and LFSDEEEKEAQLG. The span at 751–768 shows a compositional bias: basic and acidic residues; the sequence is ESLKFGRTDVAESEKEGL. The LFa 11 motif lies at 803–817; the sequence is LFDEEEDKMEDQNII. Residues 823–834 show a composition bias toward basic and acidic residues; sequence EVGKGRDPDAHP. 3 short sequence motifs (LFa) span residues 839 to 847, 856 to 862, and 878 to 888; these read VFQDEELLF, DPDVDLF, and LFGDDEDDDLF. Disordered stretches follow at residues 881-951 and 988-1205; these read DDED…KEPS and FPSS…LEDE. Composition is skewed to basic and acidic residues over residues 898–911 and 917–931; these read QEKKRVVKKDHSVD and KHPESIQGSKEKGIW. An interaction with phospholipids region spans residues 937–1341; sequence QDSSGLAPFK…DDPLNAFGGQ (405 aa). Positions 1028-1046 are enriched in basic residues; the sequence is NKSRVKMRGKRRPQTRAAR. Positions 1029 to 1047 are required for interaction with F-actin-capping protein subunit alpha (CAPZA1 or CAPZA2 or CAPZA3); the sequence is KSRVKMRGKRRPQTRAARR. Phosphoserine is present on residues Ser1054 and Ser1087. Over residues 1094–1110 the composition is skewed to low complexity; the sequence is EALAAAAAPWEGGPVPG. Phosphoserine is present on Ser1114. 6 short sequence motifs (LFa) span residues 1129 to 1136, 1171 to 1185, 1201 to 1209, 1234 to 1240, 1262 to 1270, and 1290 to 1299; these read LFDSGDIF, MFPALGEASSDDDLF, LLEDEDDLF, IFEDDIF, LFDDNIDIF, and IFDDDMDDIF. Residues 1135–1145 are compositionally biased toward polar residues; sequence IFSTGTGSQSV. The disordered stretch occupies residues 1302–1326; that stretch reads GIQAKTTKPKSRSAQAAPEPRFEHK. The LFa 21 signature appears at 1330-1338; it reads IFDDPLNAF.

This sequence belongs to the FAM21 family. Component of the WASH core complex also described as WASH regulatory complex (SHRC) composed of WASH (WASHC1, WASH2P or WASH3P), WASHC2 (WASHC2A or WASHC2C), WASHC3, WASHC4 and WASHC5; in the complex interacts (via N-terminus) directly with WASHC1. The WASH core complex associates with the F-actin-capping protein dimer (formed by CAPZA1, CAPZA2 or CAPZA3 and CAPZB) in a transient or substoichiometric manner which was initially described as WASH complex. Interacts with VPS35; mediates the association with the retromer CSC complex. Interacts with FKBP15. Interacts with CCDC93, CCDC22, VPS35L; indicative for an association of the WASH core complex with the CCC and retriever complexes. Directly interacts with TBC1D23.

Its subcellular location is the early endosome membrane. The protein localises to the cell membrane. Its function is as follows. Acts at least in part as component of the WASH core complex whose assembly at the surface of endosomes inhibits WASH nucleation-promoting factor (NPF) activity in recruiting and activating the Arp2/3 complex to induce actin polymerization and is involved in the fission of tubules that serve as transport intermediates during endosome sorting. Mediates the recruitment of the WASH core complex to endosome membranes via binding to phospholipids and VPS35 of the retromer CSC. Mediates the recruitment of the F-actin-capping protein dimer to the WASH core complex probably promoting localized F-actin polymerization needed for vesicle scission. Via its C-terminus binds various phospholipids, most strongly phosphatidylinositol 4-phosphate (PtdIns-(4)P), phosphatidylinositol 5-phosphate (PtdIns-(5)P) and phosphatidylinositol 3,5-bisphosphate (PtdIns-(3,5)P2). Involved in the endosome-to-plasma membrane trafficking and recycling of SNX27-retromer-dependent cargo proteins, such as GLUT1. Required for the association of DNAJC13, ENTR1, ANKRD50 with retromer CSC subunit VPS35. Required for the endosomal recruitment of CCC complex subunits COMMD1 and CCDC93 as well as the retriever complex subunit VPS35L. This is WASH complex subunit 2A from Homo sapiens (Human).